The primary structure comprises 103 residues: MTVSISSYLMVALILFCVGLYGALTKRNAVVVLLSIELMLNAVNINLVAFSKFGLYPSVTGQIFTLFTMTVAAAEVAVGLAILIALYRNKETVNVDEMNQMKR.

Transmembrane regions (helical) follow at residues 5–25 (ISSY…GALT), 30–50 (VVVL…LVAF), and 66–86 (LFTM…LIAL).

Belongs to the complex I subunit 4L family. As to quaternary structure, NDH-1 is composed of 14 different subunits. Subunits NuoA, H, J, K, L, M, N constitute the membrane sector of the complex.

It is found in the cell membrane. The catalysed reaction is a quinone + NADH + 5 H(+)(in) = a quinol + NAD(+) + 4 H(+)(out). In terms of biological role, NDH-1 shuttles electrons from NADH, via FMN and iron-sulfur (Fe-S) centers, to quinones in the respiratory chain. The immediate electron acceptor for the enzyme in this species is believed to be a menaquinone. Couples the redox reaction to proton translocation (for every two electrons transferred, four hydrogen ions are translocated across the cytoplasmic membrane), and thus conserves the redox energy in a proton gradient. The sequence is that of NADH-quinone oxidoreductase subunit K from Brevibacillus brevis (strain 47 / JCM 6285 / NBRC 100599).